A 504-amino-acid polypeptide reads, in one-letter code: 2,3-bisphosphoglycerate-independent phosphoglycerate mutase (504 aa).

Mn(2+)-binding residues include D11 and S61. Residue S61 is the Phosphoserine intermediate of the active site. Substrate contacts are provided by residues H122, 152–153 (RD), R183, R189, 255–258 (RNDR), and K329. Mn(2+) is bound by residues D396, H400, D437, H438, and H455.

The protein belongs to the BPG-independent phosphoglycerate mutase family. As to quaternary structure, monomer. Requires Mn(2+) as cofactor.

It carries out the reaction (2R)-2-phosphoglycerate = (2R)-3-phosphoglycerate. Its pathway is carbohydrate degradation; glycolysis; pyruvate from D-glyceraldehyde 3-phosphate: step 3/5. In terms of biological role, catalyzes the interconversion of 2-phosphoglycerate and 3-phosphoglycerate. The sequence is that of 2,3-bisphosphoglycerate-independent phosphoglycerate mutase from Bacteroides fragilis (strain ATCC 25285 / DSM 2151 / CCUG 4856 / JCM 11019 / LMG 10263 / NCTC 9343 / Onslow / VPI 2553 / EN-2).